Here is a 307-residue protein sequence, read N- to C-terminus: MDIETFLAGERAAGGYRCGFVAIVGRPNVGKSTLMNHLIGQKISITSKKAQTTRNRVTGIYTDDTAQFVFVDTPGFQTDHRNALNDRLNQNVTEALGGVDVVVFVVEAMRFTDADRVVLKQLPKHTPVILVVNKIDKDKAKDRYALEAFVAQVRAEFEFAAAEAVSAKHGLRIANLLELLKPYLPESVPMYPEDMVTDKSARFLAMEIVREKLFRYLGEELPYAMNVEVEQFEEEDGLNRIYIAVLVDKESQKAILIGKGGERLKKISTEARLDMEKLFDTKVFLKVWVKVKSGWADDIRFLRELGL.

An Era-type G domain is found at 17–186 (RCGFVAIVGR…LELLKPYLPE (170 aa)). Residues 25–32 (GRPNVGKS) form a G1 region. A GTP-binding site is contributed by 25 to 32 (GRPNVGKS). Positions 51 to 55 (QTTRN) are G2. The segment at 72 to 75 (DTPG) is G3. GTP contacts are provided by residues 72 to 76 (DTPGF) and 133 to 136 (NKID). The segment at 133–136 (NKID) is G4. The G5 stretch occupies residues 165-167 (VSA). The KH type-2 domain occupies 217–293 (LGEELPYAMN…FLKVWVKVKS (77 aa)).

This sequence belongs to the TRAFAC class TrmE-Era-EngA-EngB-Septin-like GTPase superfamily. Era GTPase family. In terms of assembly, monomer.

It is found in the cytoplasm. The protein resides in the cell inner membrane. An essential GTPase that binds both GDP and GTP, with rapid nucleotide exchange. Plays a role in 16S rRNA processing and 30S ribosomal subunit biogenesis and possibly also in cell cycle regulation and energy metabolism. The chain is GTPase Era from Neisseria meningitidis serogroup C / serotype 2a (strain ATCC 700532 / DSM 15464 / FAM18).